Consider the following 264-residue polypeptide: uncharacterized protein (264 aa).

Transmembrane regions (helical) follow at residues 1 to 21 (MLLG…SVSL), 43 to 63 (FFGV…NGFV), 95 to 115 (VVGL…LSSL), 146 to 166 (IATW…LGGL), 181 to 201 (GWLA…QPFV), and 215 to 235 (IVAN…MFFP).

This sequence to M.pneumoniae MPN_308 C-terminal region.

The protein resides in the cell membrane. This is an uncharacterized protein from Mycoplasma pneumoniae (strain ATCC 29342 / M129 / Subtype 1) (Mycoplasmoides pneumoniae).